Reading from the N-terminus, the 331-residue chain is Phosphoribosylformylglycinamidine cyclo-ligase (331 aa).

Belongs to the AIR synthase family.

It is found in the cytoplasm. It carries out the reaction 2-formamido-N(1)-(5-O-phospho-beta-D-ribosyl)acetamidine + ATP = 5-amino-1-(5-phospho-beta-D-ribosyl)imidazole + ADP + phosphate + H(+). It participates in purine metabolism; IMP biosynthesis via de novo pathway; 5-amino-1-(5-phospho-D-ribosyl)imidazole from N(2)-formyl-N(1)-(5-phospho-D-ribosyl)glycinamide: step 2/2. The sequence is that of Phosphoribosylformylglycinamidine cyclo-ligase from Clostridium botulinum (strain Langeland / NCTC 10281 / Type F).